A 197-amino-acid chain; its full sequence is Holliday junction branch migration complex subunit RuvA (197 aa).

The tract at residues M1–L63 is domain I. Residues T64–P142 form a domain II region. Residues P142 to E146 are flexible linker. Residues T147–R197 are domain III.

It belongs to the RuvA family. Homotetramer. Forms an RuvA(8)-RuvB(12)-Holliday junction (HJ) complex. HJ DNA is sandwiched between 2 RuvA tetramers; dsDNA enters through RuvA and exits via RuvB. An RuvB hexamer assembles on each DNA strand where it exits the tetramer. Each RuvB hexamer is contacted by two RuvA subunits (via domain III) on 2 adjacent RuvB subunits; this complex drives branch migration. In the full resolvosome a probable DNA-RuvA(4)-RuvB(12)-RuvC(2) complex forms which resolves the HJ.

The protein localises to the cytoplasm. Functionally, the RuvA-RuvB-RuvC complex processes Holliday junction (HJ) DNA during genetic recombination and DNA repair, while the RuvA-RuvB complex plays an important role in the rescue of blocked DNA replication forks via replication fork reversal (RFR). RuvA specifically binds to HJ cruciform DNA, conferring on it an open structure. The RuvB hexamer acts as an ATP-dependent pump, pulling dsDNA into and through the RuvAB complex. HJ branch migration allows RuvC to scan DNA until it finds its consensus sequence, where it cleaves and resolves the cruciform DNA. The protein is Holliday junction branch migration complex subunit RuvA of Syntrophotalea carbinolica (strain DSM 2380 / NBRC 103641 / GraBd1) (Pelobacter carbinolicus).